A 277-amino-acid polypeptide reads, in one-letter code: Large ribosomal subunit protein uL2 (277 aa).

The interval 219-277 (RPQTRGSAMNPVDHPHGGGEGKKNSGRHPVTPWGKPTKGAKTRRKKASDKLIISRRKGK) is disordered. Residues 231–241 (DHPHGGGEGKK) are compositionally biased toward basic and acidic residues. A compositionally biased stretch (basic residues) spans 256 to 277 (KGAKTRRKKASDKLIISRRKGK).

This sequence belongs to the universal ribosomal protein uL2 family. Part of the 50S ribosomal subunit. Forms a bridge to the 30S subunit in the 70S ribosome.

Its function is as follows. One of the primary rRNA binding proteins. Required for association of the 30S and 50S subunits to form the 70S ribosome, for tRNA binding and peptide bond formation. It has been suggested to have peptidyltransferase activity; this is somewhat controversial. Makes several contacts with the 16S rRNA in the 70S ribosome. This chain is Large ribosomal subunit protein uL2, found in Campylobacter concisus (strain 13826).